A 1335-amino-acid polypeptide reads, in one-letter code: MSLSPHVENASIPKGSTPIPKNRNVSSIGKGEFLGSSSSNNSSFRMNHYSNSGQPSVLDSIRRPNLTPTFSYSNGVYMPESHRTSSFNDSYLPYDKNPYAKTTGSMSNKSNMKIKTKKNAINTNTRKSSGLIYTTKVDKELSSIDKVNDPNINGLVCAGKTHLGLYKFSPSDRSIKCVHDFITPNSNTSTRGTTSLLPKLSKRTRQNKFSTIADVKTGFNNYKNCIAVCNNSTAISIYDLNKSSSIDNPLITSLCEHTRSINSFDFNMVESNLIISGGQDSCVKIWDLRSNKSKSSNRSDISINTASDSIRDVKWMPGYNFASKNDQGSSTYGNLKSGYKFASIHDSGYLLKFDLRQPAQYEKKLNAHTGPGLCLNWHPNQEYIATGGRDGKCCLWFVGDNANAAENTVLNYGNSPSLHAPNTSLNNSGSLAFPKLTINTGYPVTKLKFKPAYSSNIYNSLLGISSMGDEAEVRIYSLARKYIPKHVLLSETPSLGLVWWDENLIFNIDKGTRINGWDINKEPTVLENLSKNTTTWRDLDGNGLLSVDQEIGSYEVVEPELQPTSSTTCKKHPGTIKNPKNGNPENQGIIGGIKKGFSHTGLTSFTPERPPTLKAGPTFSTKSLTLASGASSFNSSSASLTSLTPQTENREEIAIEPPCIITLDIPQIFNNIRLTKIAHSRKKNVISESSSMKNSPVEKFKYLARQLKFSYIREHNVSDSADTAYKNDIENIDVVKNATETHGDNTTTTNNNDDDDDDDKIIESHLLKKYNFPENNTWATLMNEKVNNKKSKRNSSSSREFDEKDVRSSISSISASRQSHDRSRKIDKNVEAELQEKIQTLVDLISIATHNASVYLSIDDLTNFKIWILIRDSLLWDLKWMTSSQISSDNASNMDANESSDFEAGENLKTGKEFPEEDGAGTSGAESLVEERPQAFRANSDEPSDAEKKPVSKLKEQLKNTEIIPYAQPNEDSDEVLTKLKELQNQRLESRTKMGETVSDDVIIEEDEHEHQEEEQPHDSPTKSAQFHASPIAKSIPILQKREHRKSFIDTFMLHSPNGYNGDTDIGNEDDNISPRFTYNSVSPRSKVSSLQSYATTTSQLETFKKLSSHTAPIIGSPRHAPSRPDSIGREQLSSSLTKKLAKCKKIIADPPWDTKKLIKQLYNQATETGNVVLTVNILFLFQTIYQITEIDIAKDAIAHFLLLLHRYELFGIAADVLKYCPFEDIMGSEGDQSSIRLFCERCGELITNESSKEKLRAEAQQTGNKKIMDKFGYWYCDSCKKKNTSCVLCERPLKKLTMVILPCGHEGHFQCIQEWFLDENEQECPGGCPGVAFI.

Residues 1–39 (MSLSPHVENASIPKGSTPIPKNRNVSSIGKGEFLGSSSS) form a disordered region. 6 WD repeats span residues 207 to 248 (NKFS…SIDN), 256 to 296 (EHTR…SKSS), 305 to 342 (TASD…YKFA), 367 to 406 (AHTG…NAAE), 439 to 486 (NTGY…IPKH), and 489 to 527 (LSET…TVLE). Disordered stretches follow at residues 559–593 (PELQ…IGGI), 600–619 (TGLT…GPTF), 630–651 (ASSF…ENRE), 736–758 (KNAT…DDDD), and 783–824 (NEKV…DRSR). Positions 630 to 644 (ASSFNSSSASLTSLT) are enriched in low complexity. A compositionally biased stretch (low complexity) spans 808 to 817 (SSISSISASR). The WD 7 repeat unit spans residues 844–884 (LISIATHNASVYLSIDDLTNFKIWILIRDSLLWDLKWMTSS). Disordered regions lie at residues 935 to 956 (AFRA…KLKE) and 1007 to 1037 (DEHE…KSIP). Composition is skewed to basic and acidic residues over residues 945-956 (DAEKKPVSKLKE) and 1009-1021 (HEHQ…HDSP). 6 positions are modified to phosphoserine: serine 1030, serine 1074, serine 1081, serine 1083, serine 1117, and serine 1127. WD repeat units lie at residues 1130–1170 (REQL…TETG) and 1217–1256 (VLKY…KEKL). The RING-type; degenerate zinc finger occupies 1294–1335 (LKKLTMVILPCGHEGHFQCIQEWFLDENEQECPGGCPGVAFI).

The protein belongs to the WD repeat RTC1 family.

It is found in the vacuole. Functionally, may be involved in a process influencing telomere capping. This is Restriction of telomere capping protein 1 (RTC1) from Saccharomyces cerevisiae (strain YJM789) (Baker's yeast).